Reading from the N-terminus, the 501-residue chain is Ribose import ATP-binding protein RbsA (501 aa).

ABC transporter domains follow at residues 5-241 (LQLK…VGRK) and 252-495 (APGD…VGKL). Residue 37–44 (GENGAGKS) coordinates ATP.

Belongs to the ABC transporter superfamily. Ribose importer (TC 3.A.1.2.1) family. As to quaternary structure, the complex is composed of an ATP-binding protein (RbsA), two transmembrane proteins (RbsC) and a solute-binding protein (RbsB).

The protein localises to the cell inner membrane. The catalysed reaction is D-ribose(out) + ATP + H2O = D-ribose(in) + ADP + phosphate + H(+). Functionally, part of the ABC transporter complex RbsABC involved in ribose import. Responsible for energy coupling to the transport system. The protein is Ribose import ATP-binding protein RbsA of Escherichia coli O6:H1 (strain CFT073 / ATCC 700928 / UPEC).